A 477-amino-acid chain; its full sequence is Argininosuccinate lyase (477 aa).

Belongs to the lyase 1 family. Argininosuccinate lyase subfamily.

It is found in the cytoplasm. It carries out the reaction 2-(N(omega)-L-arginino)succinate = fumarate + L-arginine. It participates in amino-acid biosynthesis; L-arginine biosynthesis; L-arginine from L-ornithine and carbamoyl phosphate: step 3/3. The chain is Argininosuccinate lyase from Corynebacterium diphtheriae (strain ATCC 700971 / NCTC 13129 / Biotype gravis).